A 249-amino-acid chain; its full sequence is Ubiquinone biosynthesis O-methyltransferase (249 aa).

The tract at residues 1-23 (MTSPSQVLPASAGKPTGPNADPK) is disordered. S-adenosyl-L-methionine contacts are provided by arginine 52, glycine 71, aspartate 92, and methionine 136.

This sequence belongs to the methyltransferase superfamily. UbiG/COQ3 family.

The catalysed reaction is a 3-demethylubiquinol + S-adenosyl-L-methionine = a ubiquinol + S-adenosyl-L-homocysteine + H(+). It carries out the reaction a 3-(all-trans-polyprenyl)benzene-1,2-diol + S-adenosyl-L-methionine = a 2-methoxy-6-(all-trans-polyprenyl)phenol + S-adenosyl-L-homocysteine + H(+). The protein operates within cofactor biosynthesis; ubiquinone biosynthesis. Its function is as follows. O-methyltransferase that catalyzes the 2 O-methylation steps in the ubiquinone biosynthetic pathway. This chain is Ubiquinone biosynthesis O-methyltransferase, found in Cupriavidus pinatubonensis (strain JMP 134 / LMG 1197) (Cupriavidus necator (strain JMP 134)).